A 507-amino-acid polypeptide reads, in one-letter code: Cyclin-dependent kinase-like 2 (507 aa).

Residues 4 to 289 (YENLGLVGEG…CADLLHHDFF (286 aa)) enclose the Protein kinase domain. Residues 10 to 18 (VGEGSYGMV) and lysine 33 each bind ATP. Residues 45–51 (KKIAMRE) carry the [NKR]KIAxRE motif. Aspartate 126 (proton acceptor) is an active-site residue. Residues 365-392 (KTEKGTRASNGSCLHDNGTSHKGLSSTS) form a disordered region.

This sequence belongs to the protein kinase superfamily. CMGC Ser/Thr protein kinase family. CDC2/CDKX subfamily.

It is found in the cytoplasm. The protein resides in the nucleus. The enzyme catalyses L-seryl-[protein] + ATP = O-phospho-L-seryl-[protein] + ADP + H(+). It carries out the reaction L-threonyl-[protein] + ATP = O-phospho-L-threonyl-[protein] + ADP + H(+). This chain is Cyclin-dependent kinase-like 2, found in Rattus norvegicus (Rat).